We begin with the raw amino-acid sequence, 1939 residues long: Myosin-4 (1939 aa).

The 50-residue stretch at 33–82 (DAKSSVFVVDAKESYVKATVQSREGGKVTAKTEGGATVTVKDDQVFSMNP) folds into the Myosin N-terminal SH3-like domain. S36 is subject to Phosphoserine. T64 and T69 each carry phosphothreonine. Position 79 is a phosphoserine (S79). The region spanning 86-782 (DKIEDMAMMT…LLGTLEEMRD (697 aa)) is the Myosin motor domain. K130 carries the N6,N6,N6-trimethyllysine modification. An ATP-binding site is contributed by 179-186 (GESGAGKT). A Phosphotyrosine modification is found at Y389. T391 is subject to Phosphothreonine. The residue at position 392 (S392) is a Phosphoserine. T419 bears the Phosphothreonine mark. Residue Y424 is modified to Phosphotyrosine. Position 625 is a phosphoserine (S625). Residues 659 to 681 (LNKLMTNLKSTHPHFVRCLIPNE) form an actin-binding region. Residue H757 is modified to Pros-methylhistidine. Residues 761 to 775 (KFGHTKVFFKAGLLG) form an actin-binding region. T776 bears the Phosphothreonine mark. The IQ domain maps to 785-814 (LAQLITRTQAVCRGYLMRVEFKKMMERRES). A coiled-coil region spans residues 843–1939 (LLKSAETEKE…EVHTKVISEE (1097 aa)). 2 positions are modified to phosphoserine: S1092 and S1096. Disordered regions lie at residues 1128–1147 (AERA…SREL) and 1153–1172 (RLEE…KKRE). Residues S1162 and S1237 each carry the phosphoserine modification. Position 1241 is a phosphothreonine (T1241). S1243 bears the Phosphoserine mark. T1255 carries the post-translational modification Phosphothreonine. The residue at position 1261 (S1261) is a Phosphoserine. T1265 carries the phosphothreonine modification. Residues 1276–1299 (ELSTQKARLHTESGEFSRQLDEKD) are disordered. Position 1278 is a phosphoserine (S1278). The span at 1284-1299 (LHTESGEFSRQLDEKD) shows a compositional bias: basic and acidic residues. T1286 is subject to Phosphothreonine. Phosphoserine occurs at positions 1288, 1292, 1303, 1306, and 1413. Y1464 is subject to Phosphotyrosine. A Phosphothreonine modification is found at T1467. The residue at position 1474 (S1474) is a Phosphoserine. The residue at position 1492 (Y1492) is a Phosphotyrosine. S1495 is subject to Phosphoserine. Residue T1501 is modified to Phosphothreonine. S1514 is modified (phosphoserine). Position 1517 is a phosphothreonine (T1517). Phosphoserine occurs at positions 1542, 1547, 1554, 1574, 1600, 1603, 1714, and 1726. Phosphothreonine is present on residues T1730 and T1736. At S1739 the chain carries Phosphoserine.

It belongs to the TRAFAC class myosin-kinesin ATPase superfamily. Myosin family. In terms of assembly, muscle myosin is a hexameric protein that consists of 2 heavy chain subunits (MHC), 2 alkali light chain subunits (MLC) and 2 regulatory light chain subunits (MLC-2). In terms of tissue distribution, expressed in type 2b myofibers in the tibialis anterior muscle (at protein level).

Its subcellular location is the cytoplasm. The protein localises to the myofibril. Functionally, muscle contraction. This chain is Myosin-4 (Myh4), found in Mus musculus (Mouse).